A 100-amino-acid chain; its full sequence is Small ribosomal subunit protein bS6 (100 aa).

Belongs to the bacterial ribosomal protein bS6 family.

Its function is as follows. Binds together with bS18 to 16S ribosomal RNA. The protein is Small ribosomal subunit protein bS6 of Tropheryma whipplei (strain TW08/27) (Whipple's bacillus).